We begin with the raw amino-acid sequence, 131 residues long: Ribonuclease P protein component (131 aa).

It belongs to the RnpA family. Consists of a catalytic RNA component (M1 or rnpB) and a protein subunit.

The enzyme catalyses Endonucleolytic cleavage of RNA, removing 5'-extranucleotides from tRNA precursor.. In terms of biological role, RNaseP catalyzes the removal of the 5'-leader sequence from pre-tRNA to produce the mature 5'-terminus. It can also cleave other RNA substrates such as 4.5S RNA. The protein component plays an auxiliary but essential role in vivo by binding to the 5'-leader sequence and broadening the substrate specificity of the ribozyme. In Cyanothece sp. (strain PCC 7425 / ATCC 29141), this protein is Ribonuclease P protein component.